The primary structure comprises 204 residues: General odorant-binding protein 67 (204 aa).

Positions 1–22 (MNPVVCAFGVIFVVVTLELVVA) are cleaved as a signal peptide. Intrachain disulfides connect Cys57/Cys85, Cys81/Cys147, and Cys128/Cys157.

It belongs to the PBP/GOBP family.

Its subcellular location is the secreted. Its function is as follows. Present in the aqueous fluid surrounding olfactory sensory dendrites and are thought to aid in the capture and transport of hydrophobic odorants into and through this fluid. This is General odorant-binding protein 67 (Obp67) from Anopheles gambiae (African malaria mosquito).